The sequence spans 537 residues: DELLA protein GAI (537 aa).

Residues 1 to 33 (MKRDHQEISGSGSNPAESSSIKGKLWEEDPDAG) are disordered. The span at 9 to 20 (SGSGSNPAESSS) shows a compositional bias: low complexity. The DELLA motif signature appears at 37 to 41 (DELLA). Residues 131-157 (KSDPGLEITRKRAKTESSSSSSSTTTR) form a disordered region. Positions 147–156 (SSSSSSSTTT) are enriched in low complexity. Residues 162–533 (IDSQEAGVRL…RPLIAHLGLA (372 aa)) enclose the GRAS domain. A leucine repeat I (LRI) region spans residues 169–223 (VRLVHTLMACAEAVQQDNLKLADALVKHIGLLASSQTGAMRKVATYFAEALARRI). Residues 241 to 306 (QIPFYETCPY…GGPPAFRLTG (66 aa)) form a VHIID region. The VHIID signature appears at 272 to 276 (VHVID). Residues 320-352 (QVGWKLAQLAERIGIEFEFRGFVANSLADLEPE) are leucine repeat II (LRII). The segment at 364-454 (VAVNAVFELH…ELYLGRQICN (91 aa)) is PFYRE. The LXXLL motif motif lies at 372 to 376 (LHPLL). Positions 457–533 (ACEGMDRVER…RPLIAHLGLA (77 aa)) are SAW.

The protein belongs to the GRAS family. DELLA subfamily. Post-translationally, phosphorylated. Ubiquitinated. Upon GA application it is ubiquitinated, leading to its subsequent degradation.

It localises to the nucleus. Its function is as follows. Probable transcriptional regulator that acts as a repressor of the gibberellin (GA) signaling pathway. Probably acts by participating in large multiprotein complexes that represses transcription of GA-inducible genes. Upon GA application, it is degraded by the proteasome, allowing the GA signaling pathway. In Gossypium hirsutum (Upland cotton), this protein is DELLA protein GAI (GAI).